The following is a 404-amino-acid chain: Formate-dependent phosphoribosylglycinamide formyltransferase (404 aa).

Residues 25–26 and E85 each bind N(1)-(5-phospho-beta-D-ribosyl)glycinamide; that span reads EL. ATP-binding positions include R118, K159, 164–169, 199–202, and E207; these read SSGKGQ and EGFI. Residues 123-318 form the ATP-grasp domain; sequence RLAAEELGLP…EFELHARAIL (196 aa). Residues E277 and E289 each contribute to the Mg(2+) site. N(1)-(5-phospho-beta-D-ribosyl)glycinamide is bound by residues D296, K365, and 372–373; that span reads RR.

This sequence belongs to the PurK/PurT family. In terms of assembly, homodimer.

The catalysed reaction is N(1)-(5-phospho-beta-D-ribosyl)glycinamide + formate + ATP = N(2)-formyl-N(1)-(5-phospho-beta-D-ribosyl)glycinamide + ADP + phosphate + H(+). It participates in purine metabolism; IMP biosynthesis via de novo pathway; N(2)-formyl-N(1)-(5-phospho-D-ribosyl)glycinamide from N(1)-(5-phospho-D-ribosyl)glycinamide (formate route): step 1/1. Functionally, involved in the de novo purine biosynthesis. Catalyzes the transfer of formate to 5-phospho-ribosyl-glycinamide (GAR), producing 5-phospho-ribosyl-N-formylglycinamide (FGAR). Formate is provided by PurU via hydrolysis of 10-formyl-tetrahydrofolate. The sequence is that of Formate-dependent phosphoribosylglycinamide formyltransferase from Burkholderia pseudomallei (strain 668).